We begin with the raw amino-acid sequence, 132 residues long: Phosphoribosyl-AMP cyclohydrolase (132 aa).

Asp-82 lines the Mg(2+) pocket. Cys-83 is a binding site for Zn(2+). The Mg(2+) site is built by Asp-84 and Asp-86. Zn(2+) is bound by residues Cys-100 and Cys-107.

Belongs to the PRA-CH family. As to quaternary structure, homodimer. Requires Mg(2+) as cofactor. Zn(2+) is required as a cofactor.

The protein localises to the cytoplasm. It catalyses the reaction 1-(5-phospho-beta-D-ribosyl)-5'-AMP + H2O = 1-(5-phospho-beta-D-ribosyl)-5-[(5-phospho-beta-D-ribosylamino)methylideneamino]imidazole-4-carboxamide. It functions in the pathway amino-acid biosynthesis; L-histidine biosynthesis; L-histidine from 5-phospho-alpha-D-ribose 1-diphosphate: step 3/9. Functionally, catalyzes the hydrolysis of the adenine ring of phosphoribosyl-AMP. In Dechloromonas aromatica (strain RCB), this protein is Phosphoribosyl-AMP cyclohydrolase.